Reading from the N-terminus, the 1677-residue chain is ELMO domain-containing protein E (1677 aa).

14 disordered regions span residues 112–139 (TTTS…SSPS), 168–194 (NSKD…SNIK), 264–372 (QLHG…NTTE), 592–625 (DDDN…RSNS), 775–801 (PNSN…STNN), 888–947 (INKN…NQDI), 982–1002 (KIRS…SQPE), 1047–1075 (STNN…ETRS), 1122–1141 (KQKS…GNVS), 1197–1248 (NNNI…DNHA), 1261–1404 (DDDD…RKKR), 1434–1454 (SPGS…PQPE), 1467–1593 (KNPE…GDVS), and 1654–1677 (ESQR…SSSK). Composition is skewed to low complexity over residues 115-139 (SSSS…SSPS) and 172-194 (TNNS…SNIK). The segment covering 269 to 278 (SIGGGGGGSG) has biased composition (gly residues). 3 stretches are compositionally biased toward low complexity: residues 307–334 (SQSN…KPNN), 341–352 (TTTTTTTTTTTS), and 597–616 (NNNN…NNYN). The 219-residue stretch at 492–710 (SHQILLSDLW…HTREIIEKVC (219 aa)) folds into the ELMO domain. The span at 891 to 903 (NGGGGGGGGGGGV) shows a compositional bias: gly residues. Acidic residues predominate over residues 922-933 (IDDSDDENDNDE). Low complexity-rich tracts occupy residues 934–946 (VNNN…INQD) and 985–996 (SSSSTPDTSSPP). Residues 1186–1212 (LLDDVLDLNQTNNNIDNENDDINEAII) are a coiled coil. The span at 1228-1238 (EEEEEEEEEEE) shows a compositional bias: acidic residues. The span at 1285–1305 (NNTTTTTTTTTTTTTTTTNTT) shows a compositional bias: low complexity. The span at 1306 to 1334 (GQKRISILSTDTNRPGSSNYGESSLSNGS) shows a compositional bias: polar residues. Over residues 1387 to 1397 (DDEDDEDDDDK) the composition is skewed to acidic residues. The segment covering 1445 to 1454 (PHLSVSPQPE) has biased composition (polar residues). 3 stretches are compositionally biased toward low complexity: residues 1475–1488 (LSSS…PLLS), 1503–1574 (SNLI…PSSS), and 1663–1677 (ASSS…SSSK).

The chain is ELMO domain-containing protein E (elmoE) from Dictyostelium discoideum (Social amoeba).